Reading from the N-terminus, the 212-residue chain is Pyridoxine/pyridoxamine 5'-phosphate oxidase (212 aa).

FMN contacts are provided by residues 61-66 (RSVLLK), 76-77 (YT), Lys-83, and Gln-105. Lys-66 provides a ligand contact to substrate. Residues Tyr-123, Arg-127, and Ser-131 each coordinate substrate. FMN contacts are provided by residues 140–141 (QS) and Trp-185. A substrate-binding site is contributed by 191–193 (RLH). Arg-195 serves as a coordination point for FMN.

It belongs to the pyridoxamine 5'-phosphate oxidase family. As to quaternary structure, homodimer. FMN is required as a cofactor.

It carries out the reaction pyridoxamine 5'-phosphate + O2 + H2O = pyridoxal 5'-phosphate + H2O2 + NH4(+). It catalyses the reaction pyridoxine 5'-phosphate + O2 = pyridoxal 5'-phosphate + H2O2. It participates in cofactor metabolism; pyridoxal 5'-phosphate salvage; pyridoxal 5'-phosphate from pyridoxamine 5'-phosphate: step 1/1. It functions in the pathway cofactor metabolism; pyridoxal 5'-phosphate salvage; pyridoxal 5'-phosphate from pyridoxine 5'-phosphate: step 1/1. Its function is as follows. Catalyzes the oxidation of either pyridoxine 5'-phosphate (PNP) or pyridoxamine 5'-phosphate (PMP) into pyridoxal 5'-phosphate (PLP). In Dichelobacter nodosus (strain VCS1703A), this protein is Pyridoxine/pyridoxamine 5'-phosphate oxidase.